A 115-amino-acid chain; its full sequence is uncharacterized protein (115 aa).

Residues R1–R86 are disordered.

This is an uncharacterized protein from Homo sapiens (Human).